The sequence spans 290 residues: GTPase Era (290 aa).

The Era-type G domain occupies 2–169 (KSGFAAILGR…KNKIYENFSE (168 aa)). Residues 10–17 (GRPSTGKS) are G1. 10-17 (GRPSTGKS) provides a ligand contact to GTP. Residues 36–40 (QTTRN) form a G2 region. The G3 stretch occupies residues 57–60 (DTPG). Residues 57-61 (DTPGF) and 119-122 (NKID) each bind GTP. The segment at 119–122 (NKID) is G4. The interval 148–150 (ISA) is G5. One can recognise a KH type-2 domain in the interval 200-276 (LKEELPYSLY…NLFLQVKLKK (77 aa)).

This sequence belongs to the TRAFAC class TrmE-Era-EngA-EngB-Septin-like GTPase superfamily. Era GTPase family. As to quaternary structure, monomer.

Its subcellular location is the cytoplasm. The protein localises to the cell inner membrane. An essential GTPase that binds both GDP and GTP, with rapid nucleotide exchange. Plays a role in 16S rRNA processing and 30S ribosomal subunit biogenesis and possibly also in cell cycle regulation and energy metabolism. The sequence is that of GTPase Era from Borreliella burgdorferi (strain ATCC 35210 / DSM 4680 / CIP 102532 / B31) (Borrelia burgdorferi).